The primary structure comprises 450 residues: Neuronal acetylcholine receptor subunit alpha-10 (450 aa).

The first 24 residues, 1-24 (MGLRSHHLSLGLLLLFLLPAECLG), serve as a signal peptide directing secretion. At 25–237 (AEGRLALKLF…FTLLLRRRAA (213 aa)) the chain is on the extracellular side. N40 and N56 each carry an N-linked (GlcNAc...) asparagine glycan. 2 cysteine pairs are disulfide-bonded: C154–C168 and C218–C219. 3 consecutive transmembrane segments (helical) span residues 238–258 (AYVC…PLAF), 268–288 (VSLG…LAES), and 302–322 (YMAT…IMNL). Topologically, residues 323–428 (HYCGPSVRPV…WKRLARVMDR (106 aa)) are cytoplasmic. Positions 355-380 (EPCGQSRPPELSPSPQSPEGGAGPPA) are disordered. A helical transmembrane segment spans residues 429–449 (FFLAIFFSMALVMSLLVLVQA).

The protein belongs to the ligand-gated ion channel (TC 1.A.9) family. Acetylcholine receptor (TC 1.A.9.1) subfamily. Alpha-10/CHRNA10 sub-subfamily. As to quaternary structure, forms homo- or heterooligomeric channels in conjunction with CHRNA10. The native outer hair cell receptor may be composed of CHRNA9:CHRNA10 heterooligomers. Found in the stoichiometric form (CHRNA9)2:(CHRNA10)3. As to expression, expressed in inner-ear tissue, tonsil, immortalized B-cells, cultured T-cells and peripheral blood lymphocytes.

The protein resides in the synaptic cell membrane. The protein localises to the cell membrane. The catalysed reaction is Ca(2+)(in) = Ca(2+)(out). It carries out the reaction K(+)(in) = K(+)(out). It catalyses the reaction Na(+)(in) = Na(+)(out). The enzyme catalyses Mg(2+)(in) = Mg(2+)(out). With respect to regulation, activated by a myriad of ligands such as acetylcholine. AChR activity is inhibited by the antagonists alpha-conotoxins RgIA and GeXXA, small disulfide-constrained peptides from cone snails. In terms of biological role, component of neuronal acetylcholine receptors (nAChRs) that function as pentameric, ligand-gated cation channels with high calcium permeability. nAChRs are excitatory neurotrasnmitter receptors formed by a collection of nAChR subunits. Each nAchR subunit confers differential attributes to channel properties, including activation, deactivation and desensitization kinetics, pH sensitivity, cation permeability, and binding to allosteric modulators. Forms heteropentamers with CHRNA9. Expressed in the inner ear, in sympathetic neurons and in other non-neuronal cells, such as skin keratinocytes and lymphocytes. nAChR formed by CHRNA9:CHRNA10 is involved in modulation of auditory stimuli. The channel is permeable to a range of divalent cations including calcium, the influx of which may activate a potassium current which hyperpolarizes the cell membrane. In the ear, mediates synaptic transmission between efferent olivocochlear fibers and hair cells of the cochlea, this may lead to a reduction in basilar membrane motion, altering the activity of auditory nerve fibers and reducing the range of dynamic hearing. This may protect against acoustic trauma. May also regulate keratinocyte adhesion. This chain is Neuronal acetylcholine receptor subunit alpha-10, found in Homo sapiens (Human).